We begin with the raw amino-acid sequence, 806 residues long: Leucine--tRNA ligase (806 aa).

The short motif at 40 to 51 (PYPSGQGLHVGH) is the 'HIGH' region element. The 'KMSKS' region motif lies at 578–582 (KMSKS). Residue lysine 581 coordinates ATP.

The protein belongs to the class-I aminoacyl-tRNA synthetase family.

It localises to the cytoplasm. The catalysed reaction is tRNA(Leu) + L-leucine + ATP = L-leucyl-tRNA(Leu) + AMP + diphosphate. This chain is Leucine--tRNA ligase, found in Limosilactobacillus reuteri (strain DSM 20016) (Lactobacillus reuteri).